We begin with the raw amino-acid sequence, 1431 residues long: DNA-directed RNA polymerase subunit beta' (1431 aa).

Residues Cys-66, Cys-68, Cys-81, and Cys-84 each coordinate Zn(2+). Residues Asp-470, Asp-472, and Asp-474 each contribute to the Mg(2+) site. Zn(2+) is bound by residues Cys-813, Cys-887, Cys-894, and Cys-897.

The protein belongs to the RNA polymerase beta' chain family. The RNAP catalytic core consists of 2 alpha, 1 beta, 1 beta' and 1 omega subunit. When a sigma factor is associated with the core the holoenzyme is formed, which can initiate transcription. Mg(2+) is required as a cofactor. Zn(2+) serves as cofactor.

It catalyses the reaction RNA(n) + a ribonucleoside 5'-triphosphate = RNA(n+1) + diphosphate. In terms of biological role, DNA-dependent RNA polymerase catalyzes the transcription of DNA into RNA using the four ribonucleoside triphosphates as substrates. The protein is DNA-directed RNA polymerase subunit beta' of Parabacteroides distasonis (strain ATCC 8503 / DSM 20701 / CIP 104284 / JCM 5825 / NCTC 11152).